The sequence spans 413 residues: cAMP-dependent protein kinase regulatory subunit (413 aa).

Residues 1 to 145 (MADSSSFPGT…DSWTPPCHPK (145 aa)) are disordered. The dimerization and phosphorylation stretch occupies residues 24–161 (SPIQKISEEE…RLKTAVSNNF (138 aa)). Residues 58–67 (GNSFNGDNGS) show a composition bias toward low complexity. Residues 121–138 (TSVSAESLNPTSAGSDSW) show a composition bias toward polar residues. Position 122 is a phosphoserine (serine 122). 3',5'-cyclic AMP is bound by residues 162 to 291 (LFSH…FLEE), glutamate 240, arginine 249, 294 to 413 (LLSS…PSPS), glutamate 361, and arginine 370.

This sequence belongs to the cAMP-dependent kinase regulatory chain family. Tetramer, composed of 2 regulatory (R) and 2 catalytic (C) subunits. In the presence of cAMP it dissociates into 2 active monomeric C subunits and an R dimer.

The chain is cAMP-dependent protein kinase regulatory subunit (pkaR) from Aspergillus fumigatus (strain ATCC MYA-4609 / CBS 101355 / FGSC A1100 / Af293) (Neosartorya fumigata).